The primary structure comprises 443 residues: NADH-ubiquinone oxidoreductase chain 4 (443 aa).

15 helical membrane-spanning segments follow: residues 1 to 21 (MFIS…PEAH), 27 to 47 (VWSF…WWNF), 71 to 91 (GVAL…MMLL), 93 to 113 (TVAG…ALCV), 114 to 134 (LDLL…FLLI), 148 to 168 (IVLY…MIYS), 187 to 207 (VLGW…PVHL), 217 to 237 (PTAG…IGFL), 247 to 267 (FCVS…LFST), 279 to 299 (IVAY…FSQS), 308 to 328 (FLMI…GILY), 335 to 355 (FILY…LFFL), 362 to 382 (AFPL…IFAV), 385 to 405 (LLAY…FWAF), and 423 to 443 (EFHT…KPMA).

It belongs to the complex I subunit 4 family.

It is found in the mitochondrion membrane. The enzyme catalyses a ubiquinone + NADH + 5 H(+)(in) = a ubiquinol + NAD(+) + 4 H(+)(out). Functionally, core subunit of the mitochondrial membrane respiratory chain NADH dehydrogenase (Complex I) that is believed to belong to the minimal assembly required for catalysis. Complex I functions in the transfer of electrons from NADH to the respiratory chain. The immediate electron acceptor for the enzyme is believed to be ubiquinone. This Chlamydomonas reinhardtii (Chlamydomonas smithii) protein is NADH-ubiquinone oxidoreductase chain 4 (ND4).